We begin with the raw amino-acid sequence, 341 residues long: Holliday junction branch migration complex subunit RuvB (341 aa).

The segment at 1–182 is large ATPase domain (RuvB-L); sequence MTSSDPTLRP…FGIPTRLQFY (182 aa). ATP is bound by residues L21, R22, G63, K66, T67, T68, 129 to 131, R172, Y182, and R219; that span reads EDF. T67 is a binding site for Mg(2+). The segment at 183 to 253 is small ATPAse domain (RuvB-S); sequence TEDELDLIVA…IADRALTRLG (71 aa). Positions 256–341 are head domain (RuvB-H); sequence HLGLDLGDRR…KGPGQSDLFG (86 aa). DNA is bound by residues R292, R311, and R316.

The protein belongs to the RuvB family. As to quaternary structure, homohexamer. Forms an RuvA(8)-RuvB(12)-Holliday junction (HJ) complex. HJ DNA is sandwiched between 2 RuvA tetramers; dsDNA enters through RuvA and exits via RuvB. An RuvB hexamer assembles on each DNA strand where it exits the tetramer. Each RuvB hexamer is contacted by two RuvA subunits (via domain III) on 2 adjacent RuvB subunits; this complex drives branch migration. In the full resolvosome a probable DNA-RuvA(4)-RuvB(12)-RuvC(2) complex forms which resolves the HJ.

It is found in the cytoplasm. The catalysed reaction is ATP + H2O = ADP + phosphate + H(+). The RuvA-RuvB-RuvC complex processes Holliday junction (HJ) DNA during genetic recombination and DNA repair, while the RuvA-RuvB complex plays an important role in the rescue of blocked DNA replication forks via replication fork reversal (RFR). RuvA specifically binds to HJ cruciform DNA, conferring on it an open structure. The RuvB hexamer acts as an ATP-dependent pump, pulling dsDNA into and through the RuvAB complex. RuvB forms 2 homohexamers on either side of HJ DNA bound by 1 or 2 RuvA tetramers; 4 subunits per hexamer contact DNA at a time. Coordinated motions by a converter formed by DNA-disengaged RuvB subunits stimulates ATP hydrolysis and nucleotide exchange. Immobilization of the converter enables RuvB to convert the ATP-contained energy into a lever motion, pulling 2 nucleotides of DNA out of the RuvA tetramer per ATP hydrolyzed, thus driving DNA branch migration. The RuvB motors rotate together with the DNA substrate, which together with the progressing nucleotide cycle form the mechanistic basis for DNA recombination by continuous HJ branch migration. Branch migration allows RuvC to scan DNA until it finds its consensus sequence, where it cleaves and resolves cruciform DNA. This chain is Holliday junction branch migration complex subunit RuvB, found in Cereibacter sphaeroides (strain ATCC 17029 / ATH 2.4.9) (Rhodobacter sphaeroides).